The chain runs to 134 residues: Small ribosomal subunit protein uS9c (134 aa).

The segment at 105 to 134 (QGYLTRNPLRKERKKYGLKKARKAPQFSKR) is disordered. Over residues 115 to 134 (KERKKYGLKKARKAPQFSKR) the composition is skewed to basic residues.

Belongs to the universal ribosomal protein uS9 family.

It localises to the plastid. The protein resides in the chloroplast. In Nephroselmis olivacea (Green alga), this protein is Small ribosomal subunit protein uS9c (rps9).